We begin with the raw amino-acid sequence, 325 residues long: tRNA(Ile)-lysidine synthase (325 aa).

ATP is bound at residue 34–39; sequence SGGADS.

It belongs to the tRNA(Ile)-lysidine synthase family.

Its subcellular location is the cytoplasm. The catalysed reaction is cytidine(34) in tRNA(Ile2) + L-lysine + ATP = lysidine(34) in tRNA(Ile2) + AMP + diphosphate + H(+). Ligates lysine onto the cytidine present at position 34 of the AUA codon-specific tRNA(Ile) that contains the anticodon CAU, in an ATP-dependent manner. Cytidine is converted to lysidine, thus changing the amino acid specificity of the tRNA from methionine to isoleucine. The polypeptide is tRNA(Ile)-lysidine synthase (Rhodococcus erythropolis (strain PR4 / NBRC 100887)).